A 167-amino-acid chain; its full sequence is MNINNRIGIYPGTFDPITFGHIDIIKRACKLVDRLIIGVAENINKHTTFDAKLRTSMAENEIKRLEIDVDVVSFNGLLVKFAKEQNASVIIRGLRAVSDFDYEFQMSWVNYKLLPEIETIFLPASEDTQFISSSFVKEIARLGESVSKFVSVGVQKELINLNRIGSE.

Thr-13 is a binding site for substrate. Residues 13 to 14 (TF) and His-21 contribute to the ATP site. Residues Lys-45, Leu-78, and Arg-92 each coordinate substrate. ATP contacts are provided by residues 93–95 (GLR), Glu-103, and 128–134 (TQFISSS).

This sequence belongs to the bacterial CoaD family. In terms of assembly, homohexamer. The cofactor is Mg(2+).

The protein localises to the cytoplasm. It carries out the reaction (R)-4'-phosphopantetheine + ATP + H(+) = 3'-dephospho-CoA + diphosphate. The protein operates within cofactor biosynthesis; coenzyme A biosynthesis; CoA from (R)-pantothenate: step 4/5. Its function is as follows. Reversibly transfers an adenylyl group from ATP to 4'-phosphopantetheine, yielding dephospho-CoA (dPCoA) and pyrophosphate. This is Phosphopantetheine adenylyltransferase from Wolbachia sp. subsp. Brugia malayi (strain TRS).